The sequence spans 130 residues: Small ribosomal subunit protein uS8 (130 aa).

The protein belongs to the universal ribosomal protein uS8 family. In terms of assembly, part of the 30S ribosomal subunit. Contacts proteins S5 and S12.

Its function is as follows. One of the primary rRNA binding proteins, it binds directly to 16S rRNA central domain where it helps coordinate assembly of the platform of the 30S subunit. This is Small ribosomal subunit protein uS8 from Chromohalobacter salexigens (strain ATCC BAA-138 / DSM 3043 / CIP 106854 / NCIMB 13768 / 1H11).